Consider the following 243-residue polypeptide: TIGR03089 family protein (243 aa).

Belongs to the TIGR03089 family.

This Mycobacterium tuberculosis (strain ATCC 25618 / H37Rv) protein is TIGR03089 family protein.